We begin with the raw amino-acid sequence, 215 residues long: Phosphatidylserine decarboxylase proenzyme (215 aa).

Ser184 acts as the Schiff-base intermediate with substrate; via pyruvic acid in catalysis. Ser184 carries the post-translational modification Pyruvic acid (Ser); by autocatalysis.

The protein belongs to the phosphatidylserine decarboxylase family. PSD-A subfamily. As to quaternary structure, heterodimer of a large membrane-associated beta subunit and a small pyruvoyl-containing alpha subunit. Pyruvate serves as cofactor. Is synthesized initially as an inactive proenzyme. Formation of the active enzyme involves a self-maturation process in which the active site pyruvoyl group is generated from an internal serine residue via an autocatalytic post-translational modification. Two non-identical subunits are generated from the proenzyme in this reaction, and the pyruvate is formed at the N-terminus of the alpha chain, which is derived from the carboxyl end of the proenzyme. The post-translation cleavage follows an unusual pathway, termed non-hydrolytic serinolysis, in which the side chain hydroxyl group of the serine supplies its oxygen atom to form the C-terminus of the beta chain, while the remainder of the serine residue undergoes an oxidative deamination to produce ammonia and the pyruvoyl prosthetic group on the alpha chain.

It localises to the cell membrane. It catalyses the reaction a 1,2-diacyl-sn-glycero-3-phospho-L-serine + H(+) = a 1,2-diacyl-sn-glycero-3-phosphoethanolamine + CO2. Its pathway is phospholipid metabolism; phosphatidylethanolamine biosynthesis; phosphatidylethanolamine from CDP-diacylglycerol: step 2/2. Functionally, catalyzes the formation of phosphatidylethanolamine (PtdEtn) from phosphatidylserine (PtdSer). This chain is Phosphatidylserine decarboxylase proenzyme, found in Ralstonia nicotianae (strain ATCC BAA-1114 / GMI1000) (Ralstonia solanacearum).